The following is a 209-amino-acid chain: MTQQCNCSEGSCGGTRYEELVLERMLYSARLKESVARRDSDVIVAMASMIADTFREGGKVLLCGNGGSAADAQHLAAEFTIRYRSSVHRPALPAIALSTDTSALTAGANDLGFDEVFVRLTEAYGCPGDILIGLSTSGNSASVLKALEFARKRGLKTLALLGGDGGAIKPHADLAVVVPHTGSADRIQECHIAVGHVIVELVEKMMGYD.

Positions 50 to 209 constitute an SIS domain; sequence IADTFREGGK…ELVEKMMGYD (160 aa). 65–67 provides a ligand contact to substrate; that stretch reads NGG. Residues His74 and Glu78 each contribute to the Zn(2+) site. Residues Glu78, 109–110, 135–137, Ser140, and Gln188 each bind substrate; these read ND and STS. Zn(2+) is bound by residues Gln188 and His196.

Belongs to the SIS family. GmhA subfamily. Requires Zn(2+) as cofactor.

The protein localises to the cytoplasm. The catalysed reaction is 2 D-sedoheptulose 7-phosphate = D-glycero-alpha-D-manno-heptose 7-phosphate + D-glycero-beta-D-manno-heptose 7-phosphate. The protein operates within carbohydrate biosynthesis; D-glycero-D-manno-heptose 7-phosphate biosynthesis; D-glycero-alpha-D-manno-heptose 7-phosphate and D-glycero-beta-D-manno-heptose 7-phosphate from sedoheptulose 7-phosphate: step 1/1. Functionally, catalyzes the isomerization of sedoheptulose 7-phosphate in D-glycero-D-manno-heptose 7-phosphate. The protein is Phosphoheptose isomerase of Chlorobaculum tepidum (strain ATCC 49652 / DSM 12025 / NBRC 103806 / TLS) (Chlorobium tepidum).